We begin with the raw amino-acid sequence, 176 residues long: Ribosome maturation factor RimM (176 aa).

Residues 97–176 (EDEFYWRDLI…QILVDWDPDF (80 aa)) enclose the PRC barrel domain.

Belongs to the RimM family. As to quaternary structure, binds ribosomal protein uS19.

It is found in the cytoplasm. Its function is as follows. An accessory protein needed during the final step in the assembly of 30S ribosomal subunit, possibly for assembly of the head region. Essential for efficient processing of 16S rRNA. May be needed both before and after RbfA during the maturation of 16S rRNA. It has affinity for free ribosomal 30S subunits but not for 70S ribosomes. The polypeptide is Ribosome maturation factor RimM (Shewanella loihica (strain ATCC BAA-1088 / PV-4)).